Here is a 517-residue protein sequence, read N- to C-terminus: MEKTQTPSLTPDELSARSSTPFEEREEEEEVHYVGHLKFSFIFVGLCLSVFQVALSLQDIGWYGSAYLFTDCAFQLVFGRLYSMLPVKIVYLGALLLFEIGSIICATAPNSIALILGRTIAGIGAGGILSGALTILSQSVPRAKVAVFNGILGAVNGIAFICGPLLAGGIINGTTWRWIFYINPIISAPTFFITVFLLKLDPPKTNVKTWRGRIAMLDLPAFTLFLGSILCLILALLWGGKEYSWKNARIIVLFILFGVIMLAFMLVQKRKGDDALVPMRILCQRSIAFGMFFSFCTSGTGFILEYYLPIWLQVIKDLSVISSAVKLLPIIAAAVVFTTLCGILTPVIGHYVPFMIIATMLLSVGMGLLSTLEYTSPIRHVLGFQVPAGVGLGCALQQTLVAAQTILPMNDIPIGVSLIVLAQTLGGTIALSAADTIYTGTLSSSISSRFPQINRETVLTTGNREIRNLVPAESLSVIMDLCNKAIVKTWYLSIGLAAASIIGVLGMEWRRVTPPKK.

The tract at residues 1 to 24 is disordered; it reads MEKTQTPSLTPDELSARSSTPFEE. 5 helical membrane-spanning segments follow: residues 37 to 57, 59 to 79, 89 to 109, 112 to 132, and 151 to 171; these read LKFS…ALSL, DIGW…LVFG, IVYL…ATAP, IALI…LSGA, and ILGA…GGII. The N-linked (GlcNAc...) asparagine glycan is linked to Asn-172. 9 consecutive transmembrane segments (helical) span residues 178 to 198, 219 to 239, 247 to 267, 292 to 312, 328 to 348, 352 to 372, 381 to 401, 412 to 432, and 485 to 505; these read WIFY…VFLL, LPAF…LLWG, NARI…FMLV, FFSF…PIWL, LPII…TPVI, VPFM…LSTL, VLGF…QTLV, IPIG…IALS, and AIVK…IGVL.

The protein belongs to the major facilitator superfamily.

It localises to the cell membrane. Functionally, MFS efflux transporter; part of the inp gene cluster that mediates the biosynthesis of fellutamide B, a mycotoxin that acts as a proteasome inhibitor. In the first step of fellutabmide B biosynthesis inpC activates 3-hydroxydodecanoic acid to generate 3-hydroxydodecanoyl-AMP that is then loaded onto the T0 domain of inpB. The 3-hydroxydodecanoyl-S-phosphopantetheinyl-T0 is sequentially extended with L-Asn and L-Gln by the two CAT modules of inpB. The linear lipodipeptide from inpB is then transferred onto inpA for the addition of the third amino acid, L-Leu. Reductive releasing of the lipotripeptide by the TE domain of inpA produces (2S)-fellutamide B. InpF might be involved in the release and transfer of the lipodipeptide from inpB to inpA. The inp cluster-encoded proteasome subunit inpE confers resistance to internally produced fellutamides. The MFS efflux transporter inpD may contribute to fellutamide resistance as well. The protein is MFS efflux transporter inpD of Emericella nidulans (strain FGSC A4 / ATCC 38163 / CBS 112.46 / NRRL 194 / M139) (Aspergillus nidulans).